The following is a 351-amino-acid chain: Transmembrane protein 184 homolog DDB_G0279555 (351 aa).

The chain crosses the membrane as a helical span at residues 1–21 (MWIVAGVCSGVAILLSFYLIY). Residue Asn-26 is glycosylated (N-linked (GlcNAc...) asparagine). A run of 5 helical transmembrane segments spans residues 39–59 (ILIM…FVEL), 73–93 (YVLY…FDLV), 127–147 (FVLQ…VLET), 162–182 (YVWL…FLVL), and 206–226 (ILFF…FGVI). The N-linked (GlcNAc...) asparagine glycan is linked to Asn-236. A helical membrane pass occupies residues 241–261 (LQDFITCVEMVILAICHHFFF). 2 N-linked (GlcNAc...) asparagine glycosylation sites follow: Asn-301 and Asn-304. The interval 327 to 351 (HNHPTTKKKDEESNLLEPEDKDIII) is disordered. Residues 339 to 351 (SNLLEPEDKDIII) are compositionally biased toward acidic residues.

The protein belongs to the TMEM184 family.

It localises to the cell membrane. In terms of biological role, probable transporter. This chain is Transmembrane protein 184 homolog DDB_G0279555 (tmem184C), found in Dictyostelium discoideum (Social amoeba).